We begin with the raw amino-acid sequence, 261 residues long: Putative glyoxylase CFP32 (261 aa).

2 VOC domains span residues 11–129 and 143–257; these read TPNW…LWQA and TLIW…VLKP. Glyoxalase regions lie at residues 13 to 123 and 149 to 252; these read NWVD…TGAA and LLTD…GAIF.

The polypeptide is Putative glyoxylase CFP32 (Mycobacterium bovis (strain ATCC BAA-935 / AF2122/97)).